A 541-amino-acid polypeptide reads, in one-letter code: Chaperonin GroEL 2 (541 aa).

Residues 30-33 (TLGP), lysine 51, 87-91 (DGTTT), glycine 415, and aspartate 496 contribute to the ATP site.

The protein belongs to the chaperonin (HSP60) family. Forms a cylinder of 14 subunits composed of two heptameric rings stacked back-to-back. Interacts with the co-chaperonin GroES.

It localises to the cytoplasm. The catalysed reaction is ATP + H2O + a folded polypeptide = ADP + phosphate + an unfolded polypeptide.. Its function is as follows. Together with its co-chaperonin GroES, plays an essential role in assisting protein folding. The GroEL-GroES system forms a nano-cage that allows encapsulation of the non-native substrate proteins and provides a physical environment optimized to promote and accelerate protein folding. This Gluconacetobacter diazotrophicus (strain ATCC 49037 / DSM 5601 / CCUG 37298 / CIP 103539 / LMG 7603 / PAl5) protein is Chaperonin GroEL 2.